Here is a 329-residue protein sequence, read N- to C-terminus: Helicase VP6-A (329 aa).

2 disordered regions span residues 28-130 (NLVD…TNGG) and 189-232 (DLRR…SEEP). Composition is skewed to basic and acidic residues over residues 36–58 (EGGK…KDGE), 65–83 (GQKE…DRRI), and 96–109 (SGER…RGDG). Lysine 110 serves as a coordination point for ATP. A compositionally biased stretch (gly residues) spans 110 to 129 (KVGGGGGDADAGVGATGTNG). 2 stretches are compositionally biased toward basic and acidic residues: residues 189 to 207 (DLRR…ERGG) and 215 to 232 (HGDA…SEEP).

The protein belongs to the reoviruses VP6 family. As to quaternary structure, homohexamer.

Its subcellular location is the virion. It catalyses the reaction ATP + H2O = ADP + phosphate + H(+). Its function is as follows. ATP dependent RNA helicase essential for RNA packaging and viral transcription. Possesses ss- and dsRNA-binding capacity. In Bluetongue virus 10 (isolate USA) (BTV 10), this protein is Helicase VP6-A (Segment-9).